A 287-amino-acid chain; its full sequence is Orotidine 5'-phosphate decarboxylase (287 aa).

The active-site Proton donor is Lys-97.

The protein belongs to the OMP decarboxylase family. Type 2 subfamily.

The enzyme catalyses orotidine 5'-phosphate + H(+) = UMP + CO2. The protein operates within pyrimidine metabolism; UMP biosynthesis via de novo pathway; UMP from orotate: step 2/2. The sequence is that of Orotidine 5'-phosphate decarboxylase (pyrF) from Clostridium perfringens (strain 13 / Type A).